The primary structure comprises 422 residues: UPF0597 protein Kole_0595 (422 aa).

It belongs to the UPF0597 family.

The polypeptide is UPF0597 protein Kole_0595 (Kosmotoga olearia (strain ATCC BAA-1733 / DSM 21960 / TBF 19.5.1)).